The following is a 48-amino-acid chain: uncharacterized protein (48 aa).

A disordered region spans residues Met-1–Ser-30.

This is an uncharacterized protein from Bacillus subtilis (strain 168).